Reading from the N-terminus, the 343-residue chain is Palmitoyltransferase ZDHHC4 (343 aa).

The Lumenal portion of the chain corresponds to 1-2 (MD). A helical membrane pass occupies residues 3–23 (FLVLFLLYLALVLLGFVMICI). Over 24–67 (GSKTHYLQGLISRGAQVFSYIIPECLQRAMLSVLHYLFHTRNYT) the chain is Cytoplasmic. A helical transmembrane segment spans residues 68-88 (FVVLHLILQGMVYTEYTWEIF). At 89–95 (GLCQQLE) the chain is on the lumenal side. Residues 96–116 (FSLYYLFLPYLLLIVNLLFFT) traverse the membrane as a helical segment. The Cytoplasmic segment spans residues 117-196 (LSCVTNPGTI…GAWNTRYFLS (80 aa)). In terms of domain architecture, DHHC spans 149-199 (VRCPTCDLRKPARSKHCSVCNRCVHRFDHHCVWVNNCIGAWNTRYFLSYLF). C179 (S-palmitoyl cysteine intermediate) is an active-site residue. Residues 197–217 (YLFTLTASAATMAVVSTVFLV) form a helical membrane-spanning segment. The Lumenal segment spans residues 218–255 (RLVVMSDVYLQTYVDDLGHLQVVDTVFLVQYLFLTFPR). Residues 256–276 (IVFLVGFVVVLSFLLGGYLCF) traverse the membrane as a helical segment. Residues 277 to 343 (CLYLAATNQT…ATACYERKEK (67 aa)) lie on the Cytoplasmic side of the membrane. The short motif at 340–343 (RKEK) is the Di-lysine motif element.

Belongs to the DHHC palmitoyltransferase family. Interacts with CPT1A.

It is found in the endoplasmic reticulum membrane. The protein localises to the golgi apparatus membrane. It localises to the cell membrane. It catalyses the reaction L-cysteinyl-[protein] + hexadecanoyl-CoA = S-hexadecanoyl-L-cysteinyl-[protein] + CoA. Functionally, palmitoyltransferase that could catalyze the addition of palmitate onto protein substrates including the D(2) dopamine receptor DRD2, GSK3B or MAVS. Mediates GSK3B palmitoylation to prevent its AKT1-mediated phosphorylation leading to activation of the STAT3 signaling pathway. Also catalyzes MAVS palmitoylation which promotes its stabilization and activation by inhibiting 'Lys-48'- but facilitating 'Lys-63'-linked ubiquitination. The sequence is that of Palmitoyltransferase ZDHHC4 from Bos taurus (Bovine).